The following is a 417-amino-acid chain: Serine hydroxymethyltransferase (417 aa).

(6S)-5,6,7,8-tetrahydrofolate is bound by residues Leu-121 and 125–127; that span reads GHL. Residue Lys-229 is modified to N6-(pyridoxal phosphate)lysine. Residue 355-357 participates in (6S)-5,6,7,8-tetrahydrofolate binding; that stretch reads SPF.

This sequence belongs to the SHMT family. As to quaternary structure, homodimer. Pyridoxal 5'-phosphate is required as a cofactor.

Its subcellular location is the cytoplasm. It catalyses the reaction (6R)-5,10-methylene-5,6,7,8-tetrahydrofolate + glycine + H2O = (6S)-5,6,7,8-tetrahydrofolate + L-serine. It participates in one-carbon metabolism; tetrahydrofolate interconversion. It functions in the pathway amino-acid biosynthesis; glycine biosynthesis; glycine from L-serine: step 1/1. Functionally, catalyzes the reversible interconversion of serine and glycine with tetrahydrofolate (THF) serving as the one-carbon carrier. This reaction serves as the major source of one-carbon groups required for the biosynthesis of purines, thymidylate, methionine, and other important biomolecules. Also exhibits THF-independent aldolase activity toward beta-hydroxyamino acids, producing glycine and aldehydes, via a retro-aldol mechanism. The protein is Serine hydroxymethyltransferase of Shewanella denitrificans (strain OS217 / ATCC BAA-1090 / DSM 15013).